Reading from the N-terminus, the 289-residue chain is Bis(5'-nucleosyl)-tetraphosphatase, symmetrical (289 aa).

Belongs to the Ap4A hydrolase family.

It carries out the reaction P(1),P(4)-bis(5'-adenosyl) tetraphosphate + H2O = 2 ADP + 2 H(+). In terms of biological role, hydrolyzes diadenosine 5',5'''-P1,P4-tetraphosphate to yield ADP. The protein is Bis(5'-nucleosyl)-tetraphosphatase, symmetrical of Pseudomonas fluorescens (strain ATCC BAA-477 / NRRL B-23932 / Pf-5).